Reading from the N-terminus, the 457-residue chain is MKIHFVGIGGIGMSALALHEFFSGNEVYGSNIEETERTTYLKKLKIPVFIPHSEENWFDPDVLVKTPAVHEDNPEIIRARKENVPVENRLSYFKVILKRENREEFAVTGTDGKTTTTAMIAHVLKELNRSPTAFLGGIMDSLEHGNYESGKGPVVYELDESEETFSEFSPNYLIITNARGDHLENYANSISRYRAAFERISRNSDLVITFAEDELTSHLGNVTFGVRKGMYTLEMRSASRSGQRAIIEKNRKRYAELKLRIPGFHNILNALAVTALFDSLGYDLEEVLKALERFPGVRRRFSISYHDPENNIYVVDDYAHTPEEIKNLLQTAKEVFENEKVVVIFQPHRYSRLEREDGNFARALQLADEVIVTEVYDAFEEKRPNVSGKIIWDSLMNLGKEAKFVDDLSRLNSVIVPRDNTVFLFVGAGDIIHYSKKFVETLQSSTNSPSRVSGSKR.

Gly109–Thr115 is a binding site for ATP.

Belongs to the MurCDEF family.

It is found in the cytoplasm. The catalysed reaction is UDP-N-acetyl-alpha-D-muramate + L-alanine + ATP = UDP-N-acetyl-alpha-D-muramoyl-L-alanine + ADP + phosphate + H(+). It functions in the pathway cell wall biogenesis; peptidoglycan biosynthesis. In terms of biological role, cell wall formation. This chain is UDP-N-acetylmuramate--L-alanine ligase, found in Thermotoga neapolitana (strain ATCC 49049 / DSM 4359 / NBRC 107923 / NS-E).